The primary structure comprises 424 residues: Probable aminotransferase TAT4 (424 aa).

This sequence belongs to the class-I pyridoxal-phosphate-dependent aminotransferase family. Requires pyridoxal 5'-phosphate as cofactor.

The sequence is that of Probable aminotransferase TAT4 from Arabidopsis thaliana (Mouse-ear cress).